Reading from the N-terminus, the 1637-residue chain is Endoribonuclease Dicer homolog 3b (1637 aa).

The disordered stretch occupies residues 1–40 (MADDEAAVLPPPPPLPPPCRPHRQLRPRGSRPTADTTPRT). Pro residues predominate over residues 9–19 (LPPPPPLPPPC). Over residues 20–29 (RPHRQLRPRG) the composition is skewed to basic residues. The Helicase ATP-binding domain occupies 46-222 (VFEAALRGNT…LHNCEAHISQ (177 aa)). 59 to 66 (LDTGSGKT) is an ATP binding site. The short motif at 169-172 (DECH) is the DECH box element. Positions 404–556 (SFGSSNEVLC…ALYRHPNALS (153 aa)) constitute a Helicase C-terminal domain. In terms of domain architecture, Dicer dsRNA-binding fold spans 581–671 (CVNLIRKYCE…VPLTEEPMDT (91 aa)). Residues 882–1006 (EIIHLANKSL…VPPELLIHLD (125 aa)) form the PAZ domain. An RNase III 1 domain is found at 1031–1200 (ASQLRREIGY…LVGAYYVGGG (170 aa)). Mg(2+) contacts are provided by Asp-1214, Asp-1309, and Ser-1312. Residues 1241-1389 (IEELEAKLKY…IAGAVFIDTD (149 aa)) form the RNase III 2 domain. DRBM domains are found at residues 1412–1481 (LALP…DLKQ) and 1545–1629 (GPRS…KLQE).

It belongs to the helicase family. Dicer subfamily. As to quaternary structure, may interact with ARGONAUTE1 or PINHEAD through their common PAZ domains. The cofactor is Mg(2+). Mn(2+) serves as cofactor.

Its subcellular location is the nucleus. Probably involved in the RNA silencing pathway. May cleave double-stranded RNA to produce short 21-24 nucleotides (nt) RNAs which target the selective destruction of complementary RNAs. This is Endoribonuclease Dicer homolog 3b (DCL3B) from Oryza sativa subsp. japonica (Rice).